The following is a 147-amino-acid chain: D-aminoacyl-tRNA deacylase (147 aa).

Residues Gly136–Pro137 carry the Gly-cisPro motif, important for rejection of L-amino acids motif.

It belongs to the DTD family. Homodimer.

Its subcellular location is the cytoplasm. The catalysed reaction is glycyl-tRNA(Ala) + H2O = tRNA(Ala) + glycine + H(+). It carries out the reaction a D-aminoacyl-tRNA + H2O = a tRNA + a D-alpha-amino acid + H(+). An aminoacyl-tRNA editing enzyme that deacylates mischarged D-aminoacyl-tRNAs. Also deacylates mischarged glycyl-tRNA(Ala), protecting cells against glycine mischarging by AlaRS. Acts via tRNA-based rather than protein-based catalysis; rejects L-amino acids rather than detecting D-amino acids in the active site. By recycling D-aminoacyl-tRNA to D-amino acids and free tRNA molecules, this enzyme counteracts the toxicity associated with the formation of D-aminoacyl-tRNA entities in vivo and helps enforce protein L-homochirality. The sequence is that of D-aminoacyl-tRNA deacylase from Streptococcus equi subsp. equi (strain 4047).